The following is a 505-amino-acid chain: Probable RNA exonuclease NGL3 (505 aa).

Disordered regions lie at residues 1–75 (MDSQ…FPTP) and 334–369 (RNGE…SFTA). The span at 10-23 (SPSQKESSSTSGLV) shows a compositional bias: polar residues. The span at 36 to 54 (HRDQLSVDQIKKIREERAQ) shows a compositional bias: basic and acidic residues. Serine 62 is subject to Phosphoserine. Over residues 338–347 (ESDQDDEECD) the composition is skewed to acidic residues.

Belongs to the CCR4/nocturin family.

The sequence is that of Probable RNA exonuclease NGL3 (NGL3) from Saccharomyces cerevisiae (strain ATCC 204508 / S288c) (Baker's yeast).